A 332-amino-acid chain; its full sequence is Probable allantoicase (332 aa).

Belongs to the allantoicase family.

The enzyme catalyses allantoate + H2O = (S)-ureidoglycolate + urea. It participates in nitrogen metabolism; (S)-allantoin degradation; (S)-ureidoglycolate from allantoate (aminidohydrolase route): step 1/1. The chain is Probable allantoicase from Pseudomonas paraeruginosa (strain DSM 24068 / PA7) (Pseudomonas aeruginosa (strain PA7)).